A 335-amino-acid polypeptide reads, in one-letter code: Olfactory receptor 10R2 (335 aa).

Over 1–45 (MPQILIFTYLNMFYFFPPLQILAENLTMVTEFLLLGFSSLGEIQL) the chain is Extracellular. An N-linked (GlcNAc...) asparagine glycan is attached at asparagine 25. Residues 46–66 (ALFVVFLFLYLVILSGNVTII) form a helical membrane-spanning segment. Topologically, residues 67–74 (SVIHLDKS) are cytoplasmic. A helical transmembrane segment spans residues 75–95 (LHTPMYFFLGILSTSETFYTF). Residues 96–119 (VILPKMLINLLSVARTISFNCCAL) lie on the Extracellular side of the membrane. A disulfide bond links cysteine 117 and cysteine 209. Residues 120–140 (QMFFFLGFAITNCLLLGVMGY) traverse the membrane as a helical segment. The Cytoplasmic segment spans residues 141–159 (DRYAAICHPLHYPTLMSWQ). The helical transmembrane segment at 160–180 (VCGKLAAACAIGGFLASLTVV) threads the bilayer. The Extracellular segment spans residues 181 to 217 (NLVFSLPFCSANKVNHYFCDISAVILLACTNTDVNEF). A helical membrane pass occupies residues 218 to 237 (VIFICGVLVLVVPFLFICVS). The Cytoplasmic portion of the chain corresponds to 238–257 (YLCILRTILKIPSAEGRRKA). Residues 258 to 278 (FSTCASHLSVVIVHYGCASFI) traverse the membrane as a helical segment. The Extracellular portion of the chain corresponds to 279 to 291 (YLRPTANYVSNKD). Residues 292 to 312 (RLVTVTYTIVTPLLNPMVYSL) traverse the membrane as a helical segment. Residues 313 to 335 (RNKDVQLAIRKVLGKKGSLKLYN) are Cytoplasmic-facing.

This sequence belongs to the G-protein coupled receptor 1 family.

The protein resides in the cell membrane. Odorant receptor. This chain is Olfactory receptor 10R2 (OR10R2), found in Homo sapiens (Human).